A 202-amino-acid polypeptide reads, in one-letter code: Outer-membrane lipoprotein carrier protein (202 aa).

The signal sequence occupies residues 1-20; it reads MKKQLLIGSVLLVASSQVWA.

This sequence belongs to the LolA family. Monomer.

It localises to the periplasm. In terms of biological role, participates in the translocation of lipoproteins from the inner membrane to the outer membrane. Only forms a complex with a lipoprotein if the residue after the N-terminal Cys is not an aspartate (The Asp acts as a targeting signal to indicate that the lipoprotein should stay in the inner membrane). The polypeptide is Outer-membrane lipoprotein carrier protein (Aeromonas salmonicida (strain A449)).